Reading from the N-terminus, the 200-residue chain is NADH-quinone oxidoreductase subunit C (200 aa).

Belongs to the complex I 30 kDa subunit family. NDH-1 is composed of 14 different subunits. Subunits NuoB, C, D, E, F, and G constitute the peripheral sector of the complex.

It localises to the cell inner membrane. The enzyme catalyses a quinone + NADH + 5 H(+)(in) = a quinol + NAD(+) + 4 H(+)(out). Functionally, NDH-1 shuttles electrons from NADH, via FMN and iron-sulfur (Fe-S) centers, to quinones in the respiratory chain. The immediate electron acceptor for the enzyme in this species is believed to be ubiquinone. Couples the redox reaction to proton translocation (for every two electrons transferred, four hydrogen ions are translocated across the cytoplasmic membrane), and thus conserves the redox energy in a proton gradient. The chain is NADH-quinone oxidoreductase subunit C from Burkholderia thailandensis (strain ATCC 700388 / DSM 13276 / CCUG 48851 / CIP 106301 / E264).